We begin with the raw amino-acid sequence, 906 residues long: Translation initiation factor IF-2 (906 aa).

Disordered regions lie at residues 134 to 250 (RQRN…GSHV) and 269 to 317 (HLSA…FERP). The segment covering 136–177 (RNLDEQQRLAESDRVRDEEIQRKRDEEQAAKDRAEAERKAAE) has biased composition (basic and acidic residues). Composition is skewed to low complexity over residues 178 to 232 (EAAA…STPA) and 287 to 305 (GRPG…RGSN). Residues 405 to 574 (TRPPVVTIMG…SLQAEVLELK (170 aa)) enclose the tr-type G domain. Residues 414-421 (GHVDHGKT) form a G1 region. GTP is bound at residue 414-421 (GHVDHGKT). Residues 439 to 443 (GITQH) are G2. A G3 region spans residues 460 to 463 (DTPG). GTP-binding positions include 460–464 (DTPGH) and 514–517 (NKID). The segment at 514-517 (NKID) is G4. The interval 550–552 (SAK) is G5.

Belongs to the TRAFAC class translation factor GTPase superfamily. Classic translation factor GTPase family. IF-2 subfamily.

Its subcellular location is the cytoplasm. One of the essential components for the initiation of protein synthesis. Protects formylmethionyl-tRNA from spontaneous hydrolysis and promotes its binding to the 30S ribosomal subunits. Also involved in the hydrolysis of GTP during the formation of the 70S ribosomal complex. This chain is Translation initiation factor IF-2, found in Xanthomonas oryzae pv. oryzae (strain MAFF 311018).